Consider the following 608-residue polypeptide: Phosphogluconate dehydratase (608 aa).

Residues Cys154 and Cys221 each contribute to the [4Fe-4S] cluster site.

Belongs to the IlvD/Edd family. Requires [4Fe-4S] cluster as cofactor.

The catalysed reaction is 6-phospho-D-gluconate = 2-dehydro-3-deoxy-6-phospho-D-gluconate + H2O. It functions in the pathway carbohydrate metabolism; Entner-Doudoroff pathway. Functionally, catalyzes the dehydration of 6-phospho-D-gluconate to 2-dehydro-3-deoxy-6-phospho-D-gluconate. The chain is Phosphogluconate dehydratase from Helicobacter pylori (strain J99 / ATCC 700824) (Campylobacter pylori J99).